Here is an 892-residue protein sequence, read N- to C-terminus: Translation initiation factor IF-2 (892 aa).

Disordered regions lie at residues 144 to 176 (QQRL…QKTE) and 189 to 298 (SNSV…SGAH). The segment covering 207–219 (LPRTVRPTPAARP) has biased composition (low complexity). The tr-type G domain maps to 391–560 (PRPPVVTIMG…SIQAEVLELK (170 aa)). Residues 400 to 407 (GHVDHGKT), 446 to 450 (DTPGH), and 500 to 503 (SKID) contribute to the GTP site.

It belongs to the TRAFAC class translation factor GTPase superfamily. Classic translation factor GTPase family. IF-2 subfamily.

Its subcellular location is the cytoplasm. One of the essential components for the initiation of protein synthesis. Protects formylmethionyl-tRNA from spontaneous hydrolysis and promotes its binding to the 30S ribosomal subunits. Also involved in the hydrolysis of GTP during the formation of the 70S ribosomal complex. This is Translation initiation factor IF-2 from Xylella fastidiosa (strain M12).